A 1341-amino-acid polypeptide reads, in one-letter code: DNA-directed RNA polymerase subunit beta (1341 aa).

The protein belongs to the RNA polymerase beta chain family. In terms of assembly, the RNAP catalytic core consists of 2 alpha, 1 beta, 1 beta' and 1 omega subunit. When a sigma factor is associated with the core the holoenzyme is formed, which can initiate transcription.

It carries out the reaction RNA(n) + a ribonucleoside 5'-triphosphate = RNA(n+1) + diphosphate. DNA-dependent RNA polymerase catalyzes the transcription of DNA into RNA using the four ribonucleoside triphosphates as substrates. This is DNA-directed RNA polymerase subunit beta from Blochmanniella pennsylvanica (strain BPEN).